The chain runs to 275 residues: NH(3)-dependent NAD(+) synthetase (275 aa).

50 to 57 (GISGGVDS) lines the ATP pocket. Aspartate 56 lines the Mg(2+) pocket. Arginine 147 contributes to the deamido-NAD(+) binding site. Threonine 167 contacts ATP. Mg(2+) is bound at residue glutamate 172. Deamido-NAD(+) is bound by residues lysine 180 and aspartate 187. ATP-binding residues include lysine 196 and threonine 218. 267-268 (HK) serves as a coordination point for deamido-NAD(+).

This sequence belongs to the NAD synthetase family. As to quaternary structure, homodimer.

The catalysed reaction is deamido-NAD(+) + NH4(+) + ATP = AMP + diphosphate + NAD(+) + H(+). Its pathway is cofactor biosynthesis; NAD(+) biosynthesis; NAD(+) from deamido-NAD(+) (ammonia route): step 1/1. Its function is as follows. Catalyzes the ATP-dependent amidation of deamido-NAD to form NAD. Uses ammonia as a nitrogen source. This chain is NH(3)-dependent NAD(+) synthetase, found in Pseudomonas putida (strain GB-1).